The sequence spans 499 residues: MTLQLNGEMLTINDIKTFLNKEDTVEVTQEALERVKKSRQTVEHIIENKETIYGITTGFGLFSDVRIDKDEYNQLQVNLIRSHACGVGKPFSEEVALVMMVLRLNTLLKGHSGTTVALVEQLVYYINNRIVPVIPQQGSLGASGDLAPLSHLALALIGEGNVFFKGEEVDSRYVLNQLNRNPIQLQAKEGLALINGTQAMTAQGVINYIEAEALGYQAEWIAALTHQALNGITDAYNEKVHKARNFQEQIDVAARMLDWLDGSELTTTQGDIRVQDAYTLRCIPQIHGASFQVFNYVKEKLEFEMNAANDNPLIFDEGDETLVISGGNFHGQPIAFALDFLKLGVSELANVSERRLERLVNPQLNNGLPAFLSPQPGLQSGAMIMQYAAASLVSENKTLAHPASVDSIPSSANQEDHVSMGTIASRHGYHIIENARRVLAIETIIALQAVEYKDIDKLSPKTYEKYQELRHIVPSITEDRQFHKDIEAVSQYLQDLAYM.

The segment at residues 142 to 144 (ASG) is a cross-link (5-imidazolinone (Ala-Gly)). Position 143 is a 2,3-didehydroalanine (Ser) (Ser-143).

Belongs to the PAL/histidase family. Post-translationally, contains an active site 4-methylidene-imidazol-5-one (MIO), which is formed autocatalytically by cyclization and dehydration of residues Ala-Ser-Gly.

It localises to the cytoplasm. It catalyses the reaction L-histidine = trans-urocanate + NH4(+). It functions in the pathway amino-acid degradation; L-histidine degradation into L-glutamate; N-formimidoyl-L-glutamate from L-histidine: step 1/3. This chain is Histidine ammonia-lyase, found in Staphylococcus saprophyticus subsp. saprophyticus (strain ATCC 15305 / DSM 20229 / NCIMB 8711 / NCTC 7292 / S-41).